A 32-amino-acid chain; its full sequence is Photosystem II reaction center protein Z (32 aa).

A helical transmembrane segment spans residues 9–31; it reads FILLGAVTWAILVFIVGSLNSYV.

Belongs to the PsbZ family. As to quaternary structure, PSII is composed of 1 copy each of membrane proteins PsbA, PsbB, PsbC, PsbD, PsbE, PsbF, PsbH, PsbI, PsbJ, PsbK, PsbL, PsbM, PsbT, PsbY, PsbZ, Psb30/Ycf12, at least 3 peripheral proteins of the oxygen-evolving complex and a large number of cofactors. It forms dimeric complexes.

The protein localises to the plastid. It localises to the chloroplast thylakoid membrane. Its function is as follows. May control the interaction of photosystem II (PSII) cores with the light-harvesting antenna, regulates electron flow through the 2 photosystem reaction centers. PSII is a light-driven water plastoquinone oxidoreductase, using light energy to abstract electrons from H(2)O, generating a proton gradient subsequently used for ATP formation. This Euglena stellata protein is Photosystem II reaction center protein Z.